Consider the following 509-residue polypeptide: ATP synthase subunit alpha (509 aa).

Residue 169 to 176 (GDRQTGKT) participates in ATP binding.

The protein belongs to the ATPase alpha/beta chains family. As to quaternary structure, F-type ATPases have 2 components, CF(1) - the catalytic core - and CF(0) - the membrane proton channel. CF(1) has five subunits: alpha(3), beta(3), gamma(1), delta(1), epsilon(1). CF(0) has three main subunits: a(1), b(2) and c(9-12). The alpha and beta chains form an alternating ring which encloses part of the gamma chain. CF(1) is attached to CF(0) by a central stalk formed by the gamma and epsilon chains, while a peripheral stalk is formed by the delta and b chains.

Its subcellular location is the cell inner membrane. It catalyses the reaction ATP + H2O + 4 H(+)(in) = ADP + phosphate + 5 H(+)(out). Functionally, produces ATP from ADP in the presence of a proton gradient across the membrane. The alpha chain is a regulatory subunit. In Rhizobium leguminosarum bv. trifolii (strain WSM2304), this protein is ATP synthase subunit alpha.